A 258-amino-acid chain; its full sequence is Homeobox-leucine zipper protein ATHB-7 (258 aa).

Residues Asn-29–Gln-88 constitute a DNA-binding region (homeobox). A leucine-zipper region spans residues Leu-89 to Leu-124. Residues Ser-149–Val-183 form a disordered region. A compositionally biased stretch (basic and acidic residues) spans Thr-151–Val-183.

Belongs to the HD-ZIP homeobox family. Class I subfamily. Interacts with TBP2 and TFIIB1. Widely expressed.

Its subcellular location is the nucleus. Functionally, probable transcription activator that may act as growth regulators in response to water deficit. The polypeptide is Homeobox-leucine zipper protein ATHB-7 (ATHB-7) (Arabidopsis thaliana (Mouse-ear cress)).